A 366-amino-acid chain; its full sequence is Cyclin-O protein A (366 aa).

2 disordered regions span residues 18–55 (AAFS…GIKK) and 80–99 (YETP…PYDS).

Belongs to the cyclin family.

The protein resides in the cytoplasm. In terms of biological role, specifically required for generation of multiciliated cells, possibly by promoting a cell cycle state compatible with centriole amplification and maturation. Acts downstream of mcidas to promote mother centriole amplification and maturation in preparation for apical docking. This chain is Cyclin-O protein A (ccno-a), found in Xenopus laevis (African clawed frog).